The chain runs to 102 residues: Aspartyl/glutamyl-tRNA(Asn/Gln) amidotransferase subunit C (102 aa).

The protein belongs to the GatC family. Heterotrimer of A, B and C subunits.

The catalysed reaction is L-glutamyl-tRNA(Gln) + L-glutamine + ATP + H2O = L-glutaminyl-tRNA(Gln) + L-glutamate + ADP + phosphate + H(+). It catalyses the reaction L-aspartyl-tRNA(Asn) + L-glutamine + ATP + H2O = L-asparaginyl-tRNA(Asn) + L-glutamate + ADP + phosphate + 2 H(+). Allows the formation of correctly charged Asn-tRNA(Asn) or Gln-tRNA(Gln) through the transamidation of misacylated Asp-tRNA(Asn) or Glu-tRNA(Gln) in organisms which lack either or both of asparaginyl-tRNA or glutaminyl-tRNA synthetases. The reaction takes place in the presence of glutamine and ATP through an activated phospho-Asp-tRNA(Asn) or phospho-Glu-tRNA(Gln). The sequence is that of Aspartyl/glutamyl-tRNA(Asn/Gln) amidotransferase subunit C from Bordetella avium (strain 197N).